The following is a 370-amino-acid chain: Phosphoribosylformylglycinamidine cyclo-ligase (370 aa).

Belongs to the AIR synthase family.

The protein localises to the cytoplasm. It carries out the reaction 2-formamido-N(1)-(5-O-phospho-beta-D-ribosyl)acetamidine + ATP = 5-amino-1-(5-phospho-beta-D-ribosyl)imidazole + ADP + phosphate + H(+). The protein operates within purine metabolism; IMP biosynthesis via de novo pathway; 5-amino-1-(5-phospho-D-ribosyl)imidazole from N(2)-formyl-N(1)-(5-phospho-D-ribosyl)glycinamide: step 2/2. In Rhodospirillum rubrum (strain ATCC 11170 / ATH 1.1.1 / DSM 467 / LMG 4362 / NCIMB 8255 / S1), this protein is Phosphoribosylformylglycinamidine cyclo-ligase.